A 1106-amino-acid polypeptide reads, in one-letter code: Zinc finger protein GLI1 (1106 aa).

The SNAG domain stretch occupies residues 1 to 20 (MFNSMTPPPISSYGEPCCLR). Residues 120 to 124 (SYGHL) form an interaction with SUFU region. 5 C2H2-type zinc fingers span residues 235 to 260 (TDCRWDGCSQEFDSQEQLVHHINSEH), 268 to 295 (FVCHWGGCSRELRPFKAQYMLVVHMRRH), 301 to 325 (HKCTFEGCRKSYSRLENLKTHLRSH), 331 to 356 (YMCEHEGCSKAFSNASDRAKHQNRTH), and 362 to 387 (YVCKLPGCTKRYTDPSSLRKHVKTVH). The interval 283–291 (KAQYMLVVH) is interaction with DNA. 2 interaction with DNA regions span residues 345-350 (ASDRAK) and 375-381 (DPSSLRK). Disordered regions lie at residues 375-485 (DPSS…DEGP), 516-580 (GLKL…SLPG), 732-792 (YGGP…LYPG), 817-889 (EQGC…PTHS), and 914-942 (GREDAPAQEPSYQSPKFLGGSQVSPSRAK). Residues 413–428 (EPKREREGGPIREESR) show a composition bias toward basic and acidic residues. Residues 442–463 (PGAQSSCSSDHSPAGSAANTDS) are compositionally biased toward polar residues. An N6-acetyllysine modification is found at K518. Composition is skewed to low complexity over residues 544–560 (SSSSSISSAYTVSRRSS) and 737–753 (GAAAEPYGARGPGSLPL). A compositionally biased stretch (pro residues) spans 754 to 766 (GPGPPTNYGPNPC). The segment covering 768–779 (QQASYPDPTQET) has biased composition (polar residues). K1003 is covalently cross-linked (Glycyl lysine isopeptide (Lys-Gly) (interchain with G-Cter in SUMO2)). Positions 1054-1087 (DEPQGLSPPPSHDQRGSSGHTPPPSGPPNMAVGN) are disordered.

This sequence belongs to the GLI C2H2-type zinc-finger protein family. Interacts with KIF7. Interacts with STK36. Interacts with ZIC1; the interaction enhances transcription activation. Interacts with SUFU; this inhibits transcriptional activation by GLI1. Post-translationally, phosphorylated in vitro by ULK3. Acetylation at Lys-518 down-regulates transcriptional activity. Deacetylated by HDAC1. In terms of processing, ubiquitinated by the CRL2(FEM1B) complex, suppressing GLI1 transcriptional activator activity. In terms of tissue distribution, detected in testis (at protein level). Testis, myometrium and fallopian tube. Also expressed in the brain with highest expression in the cerebellum, optic nerve and olfactory tract. Isoform 1 is detected in brain, spleen, pancreas, liver, kidney and placenta; isoform 2 is not detectable in these tissues.

The protein resides in the cytoplasm. Its subcellular location is the nucleus. Acts as a transcriptional activator. Binds to the DNA consensus sequence 5'-GACCACCCA-3'. Regulates the transcription of specific genes during normal development. Plays a role in craniofacial development and digital development, as well as development of the central nervous system and gastrointestinal tract. Mediates SHH signaling. Plays a role in cell proliferation and differentiation via its role in SHH signaling. Its function is as follows. Acts as a transcriptional activator, but activates a different set of genes than isoform 1. Activates expression of CD24, unlike isoform 1. Mediates SHH signaling. Promotes cancer cell migration. The sequence is that of Zinc finger protein GLI1 (GLI1) from Homo sapiens (Human).